The chain runs to 800 residues: MQMQVLTAASSLPRATLLRPAAAEPWRQSFLQLQARPIQRPGIMLHCKAQLQGQETRERRQLDDDEHARPPQGGDDDVAASTSELPYMIESIKSKLRAARNSLGETTVSAYDTAWIALVNRLDGGGERSPQFPEAIDWIARNQLPDGSWGDAGMFIVQDRLINTLGCVVALATWGVHEEQRARGLAYIQDNLWRLGEDDEEWMMVGFEITFPVLLEKAKNLGLDINYDDPALQDIYAKRQLKLAKIPREALHARPTTLLHSLEGMENLDWERLLQFKCPAGSLHSSPAASAYALSETGDKELLEYLETAINNFDGGAPCTYPVDNFDRLWSVDRLRRLGISRYFTSEIEEYLEYAYRHLSPDGMSYGGLCPVKDIDDTAMAFRLLRLHGYNVSSSVFNHFEKDGEYFCFAGQSSQSLTAMYNSYRASQIVFPGDDDGLEQLRAYCRAFLEERRATGNLRDKWVIANGLPSEVEYALDFPWKASLPRVETRVYLEQYGASEDAWIGKGLYRMTLVNNDLYLEAAKADFTNFQRLSRLEWLSLKRWYIRNNLQAHGVTEQSVLRAYFLAAANIFEPNRAAERLGWARTAILAEAIASHLRQYSANGAADGMTERLISGLASHDWDWRESNDSAARSLLYALDELIDLHAFGNASDSLREAWKQWLMSWTNESQGSTGGDTALLLVRTIEICSGRHGSAEQSLKNSEDYARLEQIASSMCSKLATKILAQNGGSMDNVEGIDQEVDVEMKELIQRVYGSSSNDVSSVTRQTFLDVVKSFCYVAHCSPETIDGHISKVLFEDVN.

The segment at 52–80 (QGQETRERRQLDDDEHARPPQGGDDDVAA) is disordered. Basic and acidic residues predominate over residues 55–69 (ETRERRQLDDDEHAR). Substrate is bound at residue K242. Residues D374 and D376 each coordinate Mg(2+). Positions 374–377 (DIDD) match the DXDD motif motif. Residue K461 coordinates substrate.

Belongs to the terpene synthase family. It depends on Mg(2+) as a cofactor.

The catalysed reaction is (2E,6E,10E)-geranylgeranyl diphosphate = ent-copalyl diphosphate. Its function is as follows. Catalyzes the conversion of geranylgeranyl diphosphate to the phytoalexin precursor ent-copalyl diphosphate. This chain is Ent-copalyl diphosphate synthase 2 (CPS2), found in Oryza sativa subsp. indica (Rice).